A 264-amino-acid chain; its full sequence is Glutamate 5-kinase (264 aa).

An ATP-binding site is contributed by lysine 9. 3 residues coordinate substrate: serine 47, aspartate 132, and asparagine 144. ATP is bound by residues 164 to 165 and 206 to 212; these read SD and TGGIVTK.

Belongs to the glutamate 5-kinase family.

The protein resides in the cytoplasm. The enzyme catalyses L-glutamate + ATP = L-glutamyl 5-phosphate + ADP. Its pathway is amino-acid biosynthesis; L-proline biosynthesis; L-glutamate 5-semialdehyde from L-glutamate: step 1/2. Catalyzes the transfer of a phosphate group to glutamate to form L-glutamate 5-phosphate. The polypeptide is Glutamate 5-kinase (Helicobacter hepaticus (strain ATCC 51449 / 3B1)).